The primary structure comprises 2525 residues: Highly reducing polyketide synthase cm3B (2525 aa).

Over residues M1–L10 the composition is skewed to polar residues. A disordered region spans residues M1–P29. The region spanning P29 to A450 is the Ketosynthase family 3 (KS3) domain. Active-site for beta-ketoacyl synthase activity residues include C202, H336, and H376. A malonyl-CoA:ACP transacylase (MAT) domain region spans residues V560 to V895. The segment at H949–A1087 is N-terminal hotdog fold. Residues H949–P1252 form a dehydratase (DH) domain region. The PKS/mFAS DH domain occupies H949–L1257. The Proton acceptor; for dehydratase activity role is filled by H981. Positions V1107–L1257 are C-terminal hotdog fold. D1169 (proton donor; for dehydratase activity) is an active-site residue. Positions L1399 to F1504 are methyltransferase (CMet) domain. The tract at residues G1799–L2111 is enoyl reductase (ER) domain. One can recognise a Carrier domain in the interval A2411–S2489. Residues A2411–S2489 form a ketoreductase (KR) domain region. The residue at position 2449 (S2449) is an O-(pantetheine 4'-phosphoryl)serine.

It functions in the pathway secondary metabolite biosynthesis. In terms of biological role, highly reducing polyketide synthase; part of the gene cluster that mediates the biosynthesis of beauveriolides I and III, cyclodepsipeptides acting as inhibitors of the acyl-CoA:cholesterol acyltransferase. The HR-PKS cm3B initiates the biosynthesis of beauveriolides by iteratively catalyzing the formation of the linear polyketide chain. The ATP-dependent acetyl-CoA ligase cm3D converts the polyketide carboxylic acid to a CoA thioester which id shuttled to the first T domain in the NRPS cm3A by the acetyltransferase cm3C. Cm3A contains 13 domains and assembles the polyketide chain, L-phenylalanine, L-alanine, and D-leucine (or D-allo-isoleucine) to form beauveriolide I (or beauveriolide III). The production of both beauveriolides I and III suggests the substrate adaptability of cm3B, using different amino acids as substrates. The sequence is that of Highly reducing polyketide synthase cm3B from Cordyceps militaris (strain CM01) (Caterpillar fungus).